The following is an 817-amino-acid chain: Disks large homolog 3 (817 aa).

Residues Met-1 and His-2 each carry the N-acetylmethionine modification. The segment at 33 to 101 is disordered; the sequence is WQVPDPYGPG…GKSTPKLNGS (69 aa). Residues 40–53 are compositionally biased toward gly residues; sequence GPGGGNGASAGYGG. The segment covering 57 to 69 has biased composition (polar residues); the sequence is QTLPSQAGATPTP. 3 PDZ domains span residues 130–217, 226–311, and 379–465; these read EEIV…VRRR, EVNL…KVAK, and DFTR…VAQY. A Phosphoserine modification is found at Ser-139. The 71-residue stretch at 501–571 folds into the SH3 domain; sequence KRSLYVRALF…PSKKRVEKKE (71 aa). Residues 627 to 802 form the Guanylate kinase-like domain; that stretch reads ARPVIILGPM…IYNKIKQIIE (176 aa). Phosphotyrosine is present on Tyr-673.

The protein belongs to the MAGUK family. Interacts through its PDZ domains with NETO1, GRIN2B and SYNGAP1. Interacts through its guanylate kinase-like domain with DLGAP1, DLGAP2, DLGAP3 and DLGAP4. Interacts with FLTP/C1orf192. Interacts through its PDZ domains with APC. Interacts through its first two PDZ domains with ERBB4. Interacts through its third PDZ domain with NLGN1, and probably with NLGN2 and NLGN3. Interacts with FRMPD4 (via C-terminus). Interacts with LRFN1, LRFN2 and LRFN4. Interacts with DGKI (via PDZ-binding motif).

In terms of biological role, required for learning most likely through its role in synaptic plasticity following NMDA receptor signaling. This Homo sapiens (Human) protein is Disks large homolog 3 (DLG3).